We begin with the raw amino-acid sequence, 587 residues long: Sorting nexin 2A (587 aa).

Disordered regions lie at residues 1–78 (MMGS…DSDP) and 115–151 (SPFDENSDSEINGTEDNSLHSQFSDSLSRSPSSSSSD). 2 stretches are compositionally biased toward polar residues: residues 42-59 (NGDTSNSGYRSAMSTLSN) and 123-134 (SEINGTEDNSLH). Residues 135-150 (SQFSDSLSRSPSSSSS) show a composition bias toward low complexity. At serine 144 the chain carries Phosphoserine. A PX domain is found at 157 to 277 (VSNPQKEQEI…KVFLQVQGKL (121 aa)). Positions 201, 227, and 244 each coordinate a 1,2-diacyl-sn-glycero-3-phospho-(1D-myo-inositol-3-phosphate). One can recognise a BAR domain in the interval 331–586 (LRQSVSNDWG…TSQYDREKQS (256 aa)).

The protein belongs to the sorting nexin family. As to quaternary structure, homodimer. Heterodimer with SNX1 or SNX2A. Component of the retromer complex which consists of VPS29 (MAG1), VPS26 (VPS26A or VPS26B), VPS35 (VPS35A or VPS35B or VPS35C), VPS5/17 (SNX1 or SNX2A or SNX2B). As to expression, ubiquitously expressed but at a lower level in flowers, siliques, and senescing leaves.

The protein resides in the cytoplasm. It localises to the endosome membrane. Its subcellular location is the prevacuolar compartment membrane. The protein localises to the golgi apparatus. It is found in the trans-Golgi network membrane. In terms of biological role, plays a role in vesicular protein sorting. Acts at the crossroads between the secretory and endocytic pathways. Is involved in the endosome to vacuole protein transport and, as component of the membrane-associated retromer complex, is also involved in endosome-to-Golgi retrograde transport. Also involved in the efficient sorting of seed storage protein globulin 12S. This is Sorting nexin 2A (SNX2A) from Arabidopsis thaliana (Mouse-ear cress).